Here is a 59-residue protein sequence, read N- to C-terminus: Large ribosomal subunit protein uL30 (59 aa).

Belongs to the universal ribosomal protein uL30 family. In terms of assembly, part of the 50S ribosomal subunit.

This Photorhabdus laumondii subsp. laumondii (strain DSM 15139 / CIP 105565 / TT01) (Photorhabdus luminescens subsp. laumondii) protein is Large ribosomal subunit protein uL30.